Here is a 685-residue protein sequence, read N- to C-terminus: Bifunctional diguanylate cyclase/cyclic di-GMP phosphodiesterase MucR (685 aa).

The 194-residue stretch at 6 to 199 folds into the MHYT domain; that stretch reads YNQVLVAFSL…YTGMAAAQFP (194 aa). 7 consecutive transmembrane segments (helical) span residues 9–29, 44–64, 77–97, 117–137, 141–161, 175–195, and 214–234; these read VLVAFSLIVAILASYTALDMA, LIGGAFAMGFGIWSMHFVGML, GLTLLSLLLAVGSSAFALWLV, GIAAMHYTGMAALLMMPGIVY, WLGLSILIAVIASGAALWIAF, AGAALVMGCAIVGMHYTGMAA, and GWLAVLVIVITLAVIAIALIV. Residues 235-685 lie on the Cytoplasmic side of the membrane; sequence SVLDSRLEAR…PAEQLLASVA (451 aa). In terms of domain architecture, GGDEF spans 293–425; sequence RRFAVLFMDL…GRNGYCFFES (133 aa). Residues 434–685 enclose the EAL domain; sequence QLQLLHDLRQ…PAEQLLASVA (252 aa). The 3',3'-c-di-GMP site is built by Gln455, Glu469, Leu472, Arg473, Asn528, and Gln533. Glu469 contributes to the Mg(2+) binding site. Residue Asn528 coordinates Mg(2+). The Mg(2+) site is built by Glu560, Asp590, and Asp591. Residue Asp590 participates in 3',3'-c-di-GMP binding. Residue Arg614 participates in 3',3'-c-di-GMP binding. Glu647 is a Mg(2+) binding site. Residues Glu650 and Phe669 each contribute to the 3',3'-c-di-GMP site.

In terms of assembly, homodimer. Mg(2+) is required as a cofactor.

The protein resides in the cell inner membrane. It catalyses the reaction 2 GTP = 3',3'-c-di-GMP + 2 diphosphate. The enzyme catalyses 3',3'-c-di-GMP + H2O = 5'-phosphoguanylyl(3'-&gt;5')guanosine + H(+). Its function is as follows. Displays both diguanylate cyclase (DGC) and c-di-GMP-specific phosphodiesterase (PDE) activity. Probably modulates DGC and PDE activities, and thus c-di-GMP levels, in a growth mode-dependent manner. May act as a PDE under planktonic growth conditions and as a DGC in biofilms. During biofilm formation, it specifically activates alginate biosynthesis via generation of a localized c-di-GMP pool in the vicinity of the alginate biosynthesis protein Alg44. This Pseudomonas aeruginosa (strain ATCC 15692 / DSM 22644 / CIP 104116 / JCM 14847 / LMG 12228 / 1C / PRS 101 / PAO1) protein is Bifunctional diguanylate cyclase/cyclic di-GMP phosphodiesterase MucR.